Here is a 316-residue protein sequence, read N- to C-terminus: Small ribosomal subunit protein mS26 (316 aa).

The tract at residues 41–71 is disordered; it reads TTRSARDSVSIPPDSPNYIKVPEPPQSSEVR.

The protein belongs to the mitochondrion-specific ribosomal protein mS26 family. In terms of assembly, component of the mitochondrial small ribosomal subunit (mt-SSU). Mature N.crassa 74S mitochondrial ribosomes consist of a small (37S) and a large (54S) subunit. The 37S small subunit contains a 16S ribosomal RNA (16S mt-rRNA) and 32 different proteins. The 54S large subunit contains a 23S rRNA (23S mt-rRNA) and 42 different proteins.

Its subcellular location is the mitochondrion. Functionally, component of the mitochondrial ribosome (mitoribosome), a dedicated translation machinery responsible for the synthesis of mitochondrial genome-encoded proteins, including at least some of the essential transmembrane subunits of the mitochondrial respiratory chain. The mitoribosomes are attached to the mitochondrial inner membrane and translation products are cotranslationally integrated into the membrane. In Neurospora crassa (strain ATCC 24698 / 74-OR23-1A / CBS 708.71 / DSM 1257 / FGSC 987), this protein is Small ribosomal subunit protein mS26 (pet123).